The following is a 198-amino-acid chain: Large ribosomal subunit protein bL25 (198 aa).

Belongs to the bacterial ribosomal protein bL25 family. CTC subfamily. As to quaternary structure, part of the 50S ribosomal subunit; part of the 5S rRNA/L5/L18/L25 subcomplex. Contacts the 5S rRNA. Binds to the 5S rRNA independently of L5 and L18.

Functionally, this is one of the proteins that binds to the 5S RNA in the ribosome where it forms part of the central protuberance. The polypeptide is Large ribosomal subunit protein bL25 (Azotobacter vinelandii (strain DJ / ATCC BAA-1303)).